The chain runs to 466 residues: A-type ATP synthase subunit B 2 (466 aa).

It belongs to the ATPase alpha/beta chains family. Has multiple subunits with at least A(3), B(3), C, D, E, F, H, I and proteolipid K(x).

Its subcellular location is the cell membrane. Component of the A-type ATP synthase that produces ATP from ADP in the presence of a proton gradient across the membrane. The B chain is a regulatory subunit. The polypeptide is A-type ATP synthase subunit B 2 (Methanospirillum hungatei JF-1 (strain ATCC 27890 / DSM 864 / NBRC 100397 / JF-1)).